A 562-amino-acid chain; its full sequence is NAD-dependent malic enzyme (562 aa).

The active-site Proton donor is the Tyr101. An NAD(+)-binding site is contributed by Arg154. Catalysis depends on Lys172, which acts as the Proton acceptor. 3 residues coordinate a divalent metal cation: Glu243, Asp244, and Asp267. Positions 267 and 415 each coordinate NAD(+).

This sequence belongs to the malic enzymes family. In terms of assembly, homotetramer. Mg(2+) is required as a cofactor. Mn(2+) serves as cofactor.

The catalysed reaction is (S)-malate + NAD(+) = pyruvate + CO2 + NADH. It catalyses the reaction oxaloacetate + H(+) = pyruvate + CO2. The sequence is that of NAD-dependent malic enzyme from Shewanella pealeana (strain ATCC 700345 / ANG-SQ1).